A 330-amino-acid polypeptide reads, in one-letter code: ADP-L-glycero-D-manno-heptose-6-epimerase (330 aa).

Residues 10-11 (FI), 31-32 (DD), lysine 38, lysine 53, 74-78 (QGACS), and asparagine 91 each bind NADP(+). The active-site Proton acceptor is the tyrosine 138. Lysine 142 provides a ligand contact to NADP(+). Residue asparagine 167 coordinates substrate. Residues valine 168 and lysine 176 each contribute to the NADP(+) site. The active-site Proton acceptor is the lysine 176. Substrate contacts are provided by residues arginine 178, histidine 185, 199 to 202 (FAGW), arginine 212, and tyrosine 291.

Belongs to the NAD(P)-dependent epimerase/dehydratase family. HldD subfamily. Homopentamer. It depends on NADP(+) as a cofactor.

The catalysed reaction is ADP-D-glycero-beta-D-manno-heptose = ADP-L-glycero-beta-D-manno-heptose. It participates in nucleotide-sugar biosynthesis; ADP-L-glycero-beta-D-manno-heptose biosynthesis; ADP-L-glycero-beta-D-manno-heptose from D-glycero-beta-D-manno-heptose 7-phosphate: step 4/4. In terms of biological role, catalyzes the interconversion between ADP-D-glycero-beta-D-manno-heptose and ADP-L-glycero-beta-D-manno-heptose via an epimerization at carbon 6 of the heptose. This is ADP-L-glycero-D-manno-heptose-6-epimerase from Bordetella petrii (strain ATCC BAA-461 / DSM 12804 / CCUG 43448).